The sequence spans 377 residues: uncharacterized protein (377 aa).

Helical transmembrane passes span 21-41 (WLLAIPLLISLTLLTYGLVLF), 66-86 (LVTFVVASVVFALTVALFGLG), 163-183 (IGVLISLNLALSMVEIPGIVL), 197-217 (AILFIAIRFVGLLSTSLIAII), 236-256 (FYMGNDLVVLWIFYFFYYHIF), 292-312 (VNLICGFIEGLGFYVGYFLIL), and 339-359 (IYFLLTTTTIFSLKYLFELLF).

The protein localises to the cell membrane. This is an uncharacterized protein from Mycoplasma pneumoniae (strain ATCC 29342 / M129 / Subtype 1) (Mycoplasmoides pneumoniae).